We begin with the raw amino-acid sequence, 435 residues long: GTPase Der (435 aa).

2 consecutive EngA-type G domains span residues 3–168 (PTVA…PEDD) and 176–351 (VKLT…QNRR). Residues 9–16 (GRPNVGKS), 56–60 (DTGGY), 120–123 (NKVD), 182–189 (GRPNVGKS), 229–233 (DTAGL), and 294–297 (NKWD) each bind GTP. The KH-like domain maps to 352–435 (MKIDTSRLNN…TPIELKFRRK (84 aa)).

The protein belongs to the TRAFAC class TrmE-Era-EngA-EngB-Septin-like GTPase superfamily. EngA (Der) GTPase family. As to quaternary structure, associates with the 50S ribosomal subunit.

GTPase that plays an essential role in the late steps of ribosome biogenesis. This is GTPase Der from Chloroherpeton thalassium (strain ATCC 35110 / GB-78).